Reading from the N-terminus, the 129-residue chain is Glycine cleavage system H protein (129 aa).

The 83-residue stretch at 24–106 (TYTVGITEHA…YAGGWIFKIK (83 aa)) folds into the Lipoyl-binding domain. Lys-65 carries the post-translational modification N6-lipoyllysine.

The protein belongs to the GcvH family. The glycine cleavage system is composed of four proteins: P, T, L and H. It depends on (R)-lipoate as a cofactor.

Functionally, the glycine cleavage system catalyzes the degradation of glycine. The H protein shuttles the methylamine group of glycine from the P protein to the T protein. In Escherichia coli O45:K1 (strain S88 / ExPEC), this protein is Glycine cleavage system H protein.